We begin with the raw amino-acid sequence, 398 residues long: Succinate--CoA ligase [ADP-forming] subunit beta (398 aa).

An ATP-grasp domain is found at 9–254; the sequence is KALLKSYGAP…TTEEDEKEIE (246 aa). ATP contacts are provided by residues Lys-46, 53–55, Glu-109, Ala-112, and Glu-117; that span reads GRG. The Mg(2+) site is built by Asn-209 and Asp-223. Substrate-binding positions include Asn-274 and 331 to 333; that span reads GIM.

It belongs to the succinate/malate CoA ligase beta subunit family. As to quaternary structure, heterotetramer of two alpha and two beta subunits. Requires Mg(2+) as cofactor.

The enzyme catalyses succinate + ATP + CoA = succinyl-CoA + ADP + phosphate. The catalysed reaction is GTP + succinate + CoA = succinyl-CoA + GDP + phosphate. It participates in carbohydrate metabolism; tricarboxylic acid cycle; succinate from succinyl-CoA (ligase route): step 1/1. Functionally, succinyl-CoA synthetase functions in the citric acid cycle (TCA), coupling the hydrolysis of succinyl-CoA to the synthesis of either ATP or GTP and thus represents the only step of substrate-level phosphorylation in the TCA. The beta subunit provides nucleotide specificity of the enzyme and binds the substrate succinate, while the binding sites for coenzyme A and phosphate are found in the alpha subunit. The sequence is that of Succinate--CoA ligase [ADP-forming] subunit beta from Sinorhizobium medicae (strain WSM419) (Ensifer medicae).